Reading from the N-terminus, the 83-residue chain is Small ribosomal subunit protein bS18 (83 aa).

The segment at 1-23 is disordered; it reads MKQRNNAKRVRLEQTRRPKKNPL.

This sequence belongs to the bacterial ribosomal protein bS18 family. In terms of assembly, part of the 30S ribosomal subunit. Forms a tight heterodimer with protein bS6.

Binds as a heterodimer with protein bS6 to the central domain of the 16S rRNA, where it helps stabilize the platform of the 30S subunit. The protein is Small ribosomal subunit protein bS18 of Corynebacterium efficiens (strain DSM 44549 / YS-314 / AJ 12310 / JCM 11189 / NBRC 100395).